Here is a 167-residue protein sequence, read N- to C-terminus: Translationally-controlled tumor protein homolog (167 aa).

In terms of domain architecture, TCTP spans 1 to 167 (MIIYKDIFSG…WKHGIDEEKI (167 aa)).

The protein belongs to the TCTP family.

It localises to the cytoplasm. The protein resides in the cytoskeleton. Functionally, involved in protein synthesis. Involved in microtubule stabilization. This is Translationally-controlled tumor protein homolog from Candida glabrata (strain ATCC 2001 / BCRC 20586 / JCM 3761 / NBRC 0622 / NRRL Y-65 / CBS 138) (Yeast).